We begin with the raw amino-acid sequence, 199 residues long: MRQGFPKARAGEVIGLFGGSFDPAHQGHAHITREALKRFGLDRVWWLVSPGNPLKPQGPAPLDTRMARAKAIMQHPRVIITDVETRLGTRYTAATLDQLSALYPGVHFVWLMGADNLAQFHKWQRWRDIASTTPLGVLARPGDRIPARMSPAAAVFGRARIPGRASQLLGRAAAPAWCFVNVPMVEQSSSAIRSKGGWV.

Belongs to the NadD family.

It carries out the reaction nicotinate beta-D-ribonucleotide + ATP + H(+) = deamido-NAD(+) + diphosphate. It participates in cofactor biosynthesis; NAD(+) biosynthesis; deamido-NAD(+) from nicotinate D-ribonucleotide: step 1/1. In terms of biological role, catalyzes the reversible adenylation of nicotinate mononucleotide (NaMN) to nicotinic acid adenine dinucleotide (NaAD). The chain is Probable nicotinate-nucleotide adenylyltransferase from Roseobacter denitrificans (strain ATCC 33942 / OCh 114) (Erythrobacter sp. (strain OCh 114)).